Consider the following 862-residue polypeptide: Valine--tRNA ligase (862 aa).

Residues 47–57 (PTASGSLHIGH) carry the 'HIGH' region motif. Residues 110–130 (EPGLTPPFEGGDNKSSKAADQ) are disordered. Residues 120–129 (GDNKSSKAAD) are compositionally biased toward basic and acidic residues. The 'KMSKS' region signature appears at 584–588 (KMSKS). An ATP-binding site is contributed by Lys587.

It belongs to the class-I aminoacyl-tRNA synthetase family. ValS type 2 subfamily. Monomer.

The protein resides in the cytoplasm. It carries out the reaction tRNA(Val) + L-valine + ATP = L-valyl-tRNA(Val) + AMP + diphosphate. Functionally, catalyzes the attachment of valine to tRNA(Val). As ValRS can inadvertently accommodate and process structurally similar amino acids such as threonine, to avoid such errors, it has a 'posttransfer' editing activity that hydrolyzes mischarged Thr-tRNA(Val) in a tRNA-dependent manner. The polypeptide is Valine--tRNA ligase (Leifsonia xyli subsp. xyli (strain CTCB07)).